The sequence spans 256 residues: Gluconate 5-dehydrogenase (256 aa).

An NADP(+)-binding site is contributed by 15–39; it reads LVTGASRGIGLTLAKGLARYGAEVV. Residue Ser147 coordinates substrate. Tyr160 serves as the catalytic Proton acceptor.

Belongs to the short-chain dehydrogenases/reductases (SDR) family. In terms of assembly, homodimer.

It localises to the cytoplasm. The catalysed reaction is D-gluconate + NADP(+) = 5-dehydro-D-gluconate + NADPH + H(+). In terms of biological role, catalyzes the reversible NADP-dependent oxidation of gluconate to 5-ketogluconate. Is involved in the non-phosphorylative, ketogenic oxidation of glucose. Is almost inactive with NAD as cosubstrate. Displays high substrate specificity since D-Glucose, D-sorbitol, and D-mannitol are not oxidized by the enzyme, and 2-ketogluconate and L-sorbose are not reduced. Can accept D-fructose as a substrate, with a rate that is only 10% of the rate of 5-ketogluconate reduction. The polypeptide is Gluconate 5-dehydrogenase (Gluconobacter oxydans (strain 621H) (Gluconobacter suboxydans)).